The primary structure comprises 131 residues: UPF0102 protein YraN (131 aa).

It belongs to the UPF0102 family.

In Salmonella arizonae (strain ATCC BAA-731 / CDC346-86 / RSK2980), this protein is UPF0102 protein YraN.